A 165-amino-acid chain; its full sequence is Large ribosomal subunit protein uL22c (165 aa).

It belongs to the universal ribosomal protein uL22 family. In terms of assembly, part of the 50S ribosomal subunit.

The protein resides in the plastid. It is found in the chloroplast. In terms of biological role, this protein binds specifically to 23S rRNA. Functionally, the globular domain of the protein is located near the polypeptide exit tunnel on the outside of the subunit, while an extended beta-hairpin is found that lines the wall of the exit tunnel in the center of the 70S ribosome. This is Large ribosomal subunit protein uL22c (rpl22) from Daucus carota (Wild carrot).